We begin with the raw amino-acid sequence, 136 residues long: MNTAGPAGKLAGHAASGPTQRQLRVGEEVRRMLADLFARTEFRDPELVDVRITVTEVRISPDLKHATAFVARLGRSDVETLLPALKRVAPFLRSRLSTGLRLRGVPEIHFQPDTALDYAMEVDALLRQPDVARDLD.

Residues 1–22 (MNTAGPAGKLAGHAASGPTQRQ) are disordered.

This sequence belongs to the RbfA family. As to quaternary structure, monomer. Binds 30S ribosomal subunits, but not 50S ribosomal subunits or 70S ribosomes.

Its subcellular location is the cytoplasm. Functionally, one of several proteins that assist in the late maturation steps of the functional core of the 30S ribosomal subunit. Associates with free 30S ribosomal subunits (but not with 30S subunits that are part of 70S ribosomes or polysomes). Required for efficient processing of 16S rRNA. May interact with the 5'-terminal helix region of 16S rRNA. This Gluconacetobacter diazotrophicus (strain ATCC 49037 / DSM 5601 / CCUG 37298 / CIP 103539 / LMG 7603 / PAl5) protein is Ribosome-binding factor A.